A 298-amino-acid chain; its full sequence is Acetylglutamate kinase (298 aa).

Substrate is bound by residues Gly-69–Gly-70, Arg-91, and Asn-196.

It belongs to the acetylglutamate kinase family. ArgB subfamily.

It localises to the cytoplasm. The catalysed reaction is N-acetyl-L-glutamate + ATP = N-acetyl-L-glutamyl 5-phosphate + ADP. The protein operates within amino-acid biosynthesis; L-arginine biosynthesis; N(2)-acetyl-L-ornithine from L-glutamate: step 2/4. In terms of biological role, catalyzes the ATP-dependent phosphorylation of N-acetyl-L-glutamate. In Nitrobacter hamburgensis (strain DSM 10229 / NCIMB 13809 / X14), this protein is Acetylglutamate kinase.